The following is a 479-amino-acid chain: Anaerobic nitric oxide reductase flavorubredoxin (479 aa).

The tract at residues 30-210 (LRGSSYNSYL…PFSRLVTPKI (181 aa)) is zinc metallo-hydrolase. The Fe cation site is built by His79, Glu81, Asp83, His147, Asp166, and His227. A Flavodoxin-like domain is found at 254–393 (ITIFYDTMSN…LCRQHGRDIA (140 aa)). FMN-binding positions include 260–264 (TMSNN) and 342–369 (AFGS…EMSL). One can recognise a Rubredoxin-like domain in the interval 423–474 (GPKMQCSVCQWIYDPALGEPLQDVAPGTPWSDVPDNFLCPECSLGKDVFDVL). The Fe cation site is built by Cys428, Cys431, Cys461, and Cys464.

The protein in the N-terminal section; belongs to the zinc metallo-hydrolase group 3 family. As to quaternary structure, homotetramer. Requires Fe cation as cofactor. The cofactor is FMN.

The protein resides in the cytoplasm. Its pathway is nitrogen metabolism; nitric oxide reduction. In terms of biological role, anaerobic nitric oxide reductase; uses NADH to detoxify nitric oxide (NO), protecting several 4Fe-4S NO-sensitive enzymes. Has at least 2 reductase partners, only one of which (NorW, flavorubredoxin reductase) has been identified. NO probably binds to the di-iron center; electrons enter from the NorW at rubredoxin and are transferred sequentially to the FMN center and the di-iron center. Also able to function as an aerobic oxygen reductase. This Salmonella paratyphi B (strain ATCC BAA-1250 / SPB7) protein is Anaerobic nitric oxide reductase flavorubredoxin.